We begin with the raw amino-acid sequence, 874 residues long: Alanine--tRNA ligase (874 aa).

Residues His-563, His-567, Cys-665, and His-669 each contribute to the Zn(2+) site.

This sequence belongs to the class-II aminoacyl-tRNA synthetase family. Requires Zn(2+) as cofactor.

It is found in the cytoplasm. It catalyses the reaction tRNA(Ala) + L-alanine + ATP = L-alanyl-tRNA(Ala) + AMP + diphosphate. Catalyzes the attachment of alanine to tRNA(Ala) in a two-step reaction: alanine is first activated by ATP to form Ala-AMP and then transferred to the acceptor end of tRNA(Ala). Also edits incorrectly charged Ser-tRNA(Ala) and Gly-tRNA(Ala) via its editing domain. The polypeptide is Alanine--tRNA ligase (Haemophilus ducreyi (strain 35000HP / ATCC 700724)).